The following is a 488-amino-acid chain: UDP-glycosyltransferase 92A1 (488 aa).

Residues serine 292, 358 to 360 (APQ), 375 to 383 (HCGWNSILE), and 397 to 400 (AAEQ) each bind UDP-alpha-D-glucose.

Belongs to the UDP-glycosyltransferase family.

The protein is UDP-glycosyltransferase 92A1 (UGT92A1) of Arabidopsis thaliana (Mouse-ear cress).